Consider the following 701-residue polypeptide: Elongation factor G (701 aa).

Residues 11 to 287 (TKVRNIGIMA…AVIDYLPSPL (277 aa)) form the tr-type G domain. GTP-binding positions include 20 to 27 (AHIDAGKT), 84 to 88 (DTPGH), and 138 to 141 (NKMD).

Belongs to the TRAFAC class translation factor GTPase superfamily. Classic translation factor GTPase family. EF-G/EF-2 subfamily.

The protein localises to the cytoplasm. In terms of biological role, catalyzes the GTP-dependent ribosomal translocation step during translation elongation. During this step, the ribosome changes from the pre-translocational (PRE) to the post-translocational (POST) state as the newly formed A-site-bound peptidyl-tRNA and P-site-bound deacylated tRNA move to the P and E sites, respectively. Catalyzes the coordinated movement of the two tRNA molecules, the mRNA and conformational changes in the ribosome. This chain is Elongation factor G, found in Mycobacterium ulcerans (strain Agy99).